The chain runs to 435 residues: ATP-dependent protease ATPase subunit HslU (435 aa).

Residues valine 18, 60-65, aspartate 248, glutamate 313, and arginine 385 each bind ATP; that span reads GVGKTE.

It belongs to the ClpX chaperone family. HslU subfamily. A double ring-shaped homohexamer of HslV is capped on each side by a ring-shaped HslU homohexamer. The assembly of the HslU/HslV complex is dependent on binding of ATP.

It is found in the cytoplasm. Functionally, ATPase subunit of a proteasome-like degradation complex; this subunit has chaperone activity. The binding of ATP and its subsequent hydrolysis by HslU are essential for unfolding of protein substrates subsequently hydrolyzed by HslV. HslU recognizes the N-terminal part of its protein substrates and unfolds these before they are guided to HslV for hydrolysis. The protein is ATP-dependent protease ATPase subunit HslU of Azorhizobium caulinodans (strain ATCC 43989 / DSM 5975 / JCM 20966 / LMG 6465 / NBRC 14845 / NCIMB 13405 / ORS 571).